A 135-amino-acid chain; its full sequence is MVLDSVARIVKVQLPAYLKQLPVPDSITGFARLTVSDWLRLLPFLGVLALLGYLAVRPFFPKKKQQKDSLINLKIQKENPKVVNEINIEDLCLTKAAYCRCWRSKTFPACDGSHNKHNELTGDNVGPLILKKKEV.

Residues 1–37 (MVLDSVARIVKVQLPAYLKQLPVPDSITGFARLTVSD) lie on the Lumenal side of the membrane. Residues 38–60 (WLRLLPFLGVLALLGYLAVRPFF) traverse the membrane as a helical segment. The Cytoplasmic segment spans residues 61-135 (PKKKQQKDSL…GPLILKKKEV (75 aa)). [2Fe-2S] cluster contacts are provided by cysteine 99, cysteine 101, cysteine 110, and histidine 114.

Belongs to the CISD protein family. CISD2 subfamily. As to quaternary structure, homodimer. Interacts with BCL2; the interaction is direct and disrupted by BIK interaction with BCL2. Interacts with BCL2L1. Interacts with ITPR1. Requires [2Fe-2S] cluster as cofactor. As to expression, brain.

It localises to the endoplasmic reticulum membrane. Its subcellular location is the mitochondrion outer membrane. Regulator of autophagy that contributes to antagonize BECN1-mediated cellular autophagy at the endoplasmic reticulum. Participates in the interaction of BCL2 with BECN1 and is required for BCL2-mediated depression of endoplasmic reticulum Ca(2+) stores during autophagy. Contributes to BIK-initiated autophagy, while it is not involved in BIK-dependent activation of caspases. Involved in life span control, probably via its function as regulator of autophagy. The protein is CDGSH iron-sulfur domain-containing protein 2 (Cisd2) of Mus musculus (Mouse).